The sequence spans 120 residues: NAD(P)H-quinone oxidoreductase subunit 3 (120 aa).

3 helical membrane passes run 6–26 (GYDAFLGFLLISAAVPILALV), 64–84 (MFALVFVIFDVETVFLYPWAV), and 89–109 (LGLLAFIEALIFIAILLVALA).

Belongs to the complex I subunit 3 family. In terms of assembly, NDH-1 can be composed of about 15 different subunits; different subcomplexes with different compositions have been identified which probably have different functions.

The protein localises to the cellular thylakoid membrane. It catalyses the reaction a plastoquinone + NADH + (n+1) H(+)(in) = a plastoquinol + NAD(+) + n H(+)(out). The enzyme catalyses a plastoquinone + NADPH + (n+1) H(+)(in) = a plastoquinol + NADP(+) + n H(+)(out). NDH-1 shuttles electrons from an unknown electron donor, via FMN and iron-sulfur (Fe-S) centers, to quinones in the respiratory and/or the photosynthetic chain. The immediate electron acceptor for the enzyme in this species is believed to be plastoquinone. Couples the redox reaction to proton translocation, and thus conserves the redox energy in a proton gradient. Cyanobacterial NDH-1 also plays a role in inorganic carbon-concentration. This is NAD(P)H-quinone oxidoreductase subunit 3 from Prochlorococcus marinus (strain MIT 9313).